A 459-amino-acid chain; its full sequence is Exodeoxyribonuclease 7 large subunit (459 aa).

This sequence belongs to the XseA family. In terms of assembly, heterooligomer composed of large and small subunits.

It is found in the cytoplasm. It carries out the reaction Exonucleolytic cleavage in either 5'- to 3'- or 3'- to 5'-direction to yield nucleoside 5'-phosphates.. In terms of biological role, bidirectionally degrades single-stranded DNA into large acid-insoluble oligonucleotides, which are then degraded further into small acid-soluble oligonucleotides. This is Exodeoxyribonuclease 7 large subunit from Yersinia pestis bv. Antiqua (strain Antiqua).